Consider the following 297-residue polypeptide: MNQVDTRKETLEFNKLQKRLRRNVGNAITDYNMIEEGDVVMACISGGKDSFAMLDILLNLQKAAPIKFEVVAVNLDQKQPGFPEHILPDYFETLNIPYYIVDKDTYSVVKEKVPEGKTTCGLCSRLRRGTLYSFAEKIGATKLALGHHMDDIVETMFLNMFHGSRLKAMPPKLRSDDGRNVVIRPLTYCREKDLIKYAEHKEFPIIPCNLCGSQENLQRQSIKAMLIDWDKKTPGRVEAIFKSIQNVSPSQLADRELFDFENLPLDREGNREEYEFSEAVVSSTNIDESMFIDVTNI.

A PP-loop motif motif is present at residues S45–S50. [4Fe-4S] cluster-binding residues include C120, C123, and C211.

Belongs to the TtcA family. Homodimer. Mg(2+) serves as cofactor. [4Fe-4S] cluster is required as a cofactor.

It localises to the cytoplasm. It carries out the reaction cytidine(32) in tRNA + S-sulfanyl-L-cysteinyl-[cysteine desulfurase] + AH2 + ATP = 2-thiocytidine(32) in tRNA + L-cysteinyl-[cysteine desulfurase] + A + AMP + diphosphate + H(+). The protein operates within tRNA modification. Functionally, catalyzes the ATP-dependent 2-thiolation of cytidine in position 32 of tRNA, to form 2-thiocytidine (s(2)C32). The sulfur atoms are provided by the cysteine/cysteine desulfurase (IscS) system. The sequence is that of tRNA-cytidine(32) 2-sulfurtransferase from Vibrio campbellii (strain ATCC BAA-1116).